A 391-amino-acid polypeptide reads, in one-letter code: Multidrug resistance protein MdtL (391 aa).

Helical transmembrane passes span 4-24 (FLIC…MYLV), 42-62 (IAFS…GKVA), 69-89 (PVAI…SLAE), 93-113 (LFLA…VVAF), 131-151 (LLNG…HLIM), 158-178 (SLFW…LFIL), 203-222 (FFLS…LTFV), 245-265 (ALTA…LGIF), 269-289 (TLMI…AVSP), 293-313 (VSLF…GVAM), 331-351 (LGIA…VVGI), and 356-376 (MLIG…MFVA).

It belongs to the major facilitator superfamily. DHA1 family. MdtL (TC 2.A.1.2.22) subfamily.

The protein resides in the cell inner membrane. Functionally, confers resistance to chloramphenicol. In Escherichia coli (strain 55989 / EAEC), this protein is Multidrug resistance protein MdtL.